Here is a 232-residue protein sequence, read N- to C-terminus: N-(5'-phosphoribosyl)anthranilate isomerase (232 aa).

Belongs to the TrpF family.

The enzyme catalyses N-(5-phospho-beta-D-ribosyl)anthranilate = 1-(2-carboxyphenylamino)-1-deoxy-D-ribulose 5-phosphate. It participates in amino-acid biosynthesis; L-tryptophan biosynthesis; L-tryptophan from chorismate: step 3/5. The protein is N-(5'-phosphoribosyl)anthranilate isomerase (TRP1) of Lipomyces starkeyi (Oleaginous yeast).